Here is a 179-residue protein sequence, read N- to C-terminus: Large ribosomal subunit protein uL5 (179 aa).

The protein belongs to the universal ribosomal protein uL5 family. As to quaternary structure, part of the 50S ribosomal subunit; part of the 5S rRNA/L5/L18/L25 subcomplex. Contacts the 5S rRNA and the P site tRNA. Forms a bridge to the 30S subunit in the 70S ribosome.

In terms of biological role, this is one of the proteins that bind and probably mediate the attachment of the 5S RNA into the large ribosomal subunit, where it forms part of the central protuberance. In the 70S ribosome it contacts protein S13 of the 30S subunit (bridge B1b), connecting the 2 subunits; this bridge is implicated in subunit movement. Contacts the P site tRNA; the 5S rRNA and some of its associated proteins might help stabilize positioning of ribosome-bound tRNAs. The sequence is that of Large ribosomal subunit protein uL5 from Bordetella bronchiseptica (strain ATCC BAA-588 / NCTC 13252 / RB50) (Alcaligenes bronchisepticus).